A 919-amino-acid polypeptide reads, in one-letter code: MGSKNKIAKCPIRTKQTGYILKSTQNTCIRSGKLLQKKRMGSETSLAKGEKSSMIFSPTKDLCKQYVDKDCLYVQKEISPATPTIQKTRNTINTSVVAKQKHCKKHITAENTKSGLVCLTQDQLQQILMTVNQGNKSISAIENGKEETSQDSLHLNNTSNQPKDENIMGFQKNEALSSVLDENKSTLNKNQETSKQYEQKIAIENVWKPADIFSTLGERERDRSLLEAKKAQWKKELDEQVALKKKEKEASEKWNNPWKKFESDKIVWEKFQTLGQSKTSLSSSNILSQSPSQITVVQADDYPLCRASQILEETVPLERPLSTVKQEQQRKWIEDLNKQIEDDRQRKIEEKITSSKGEEHDRWAMHFDSLKNYPASQSQLSSRSIHNQPEYFCVSPDTQELSDISNVYTPTTGSQVEPSEEEHIAKPVRDMAMANSQKTNFLRSMTALLDPAQIEERDRRRQKQLEHQKAITAQVEEKRRKKQLEEQQRKKEEQEEERRLAREREEMQKQYEEDILKQKQKEEIMTLKTNELFQTMQRAQELAQRLKQEQRIRELAQKGHDTSGLIKNLGGYGLDDVSGKMNTCINSTTSPKKDTAVQTDDLNTGMFTIAESCCGSIIEREILNCSSPEIPAEFNDQFKKDKQELINQDKAANLEKENSWYNDQYEFARTEKKHMKKCPKRPDWNINKPLKRYIPASEKYPKQLQKQREEKKVRRQMELLNLVERNNPGHLSQNRGTSPVLPSPQEAEARFRWHLIRKEEPLKSDSFSKKKKNRSQSPLELVKNRTQQTQTLKNRENLILGDSQTETSPGASEPSHFIPYVRTNEIYHLDPDAPLSRPLTQDLQYQNPHDCDQEQWQLFESDVRDPLLNPNLVKNRDRQQAILKGLSELRQGLLQKQRELETNLMPLAANQEENFNSSF.

4 disordered regions span residues 145-166, 456-505, 724-744, and 762-816; these read KEET…KDEN, ERDR…RERE, ERNN…LPSP, and LKSD…EPSH. A compositionally biased stretch (polar residues) spans 150–161; sequence QDSLHLNNTSNQ. Residues 467 to 558 adopt a coiled-coil conformation; the sequence is HQKAITAQVE…EQRIRELAQK (92 aa). Positions 570-919 are mediates localization to cilia, centrosomes and spindle microtubules and the interaction with PCM1, CEP290, CEP104 and CSPP1; that stretch reads GGYGLDDVSG…NQEENFNSSF (350 aa).

As to quaternary structure, homodimer; disulfide-linked. Interacts with CEP290. Interacts with PCM1. Interacts with ARMC9, TOGARAM1, CSPP1 and CEP104. Interacts with CDK5RAP2, CEP152, CEP192, TBG1 and PRC1. As to expression, expressed in retina and blood. Expressed in retina, mainly in photoreceptors but also in outer plexiform and ganglion cell layers (at protein level).

Its subcellular location is the cytoplasm. The protein localises to the cytoskeleton. It localises to the microtubule organizing center. It is found in the centrosome. The protein resides in the centriolar satellite. Its subcellular location is the cell projection. The protein localises to the cilium. It localises to the cilium basal body. It is found in the cilium axoneme. The protein resides in the photoreceptor inner segment. Its subcellular location is the photoreceptor outer segment. In terms of biological role, microtubule-binding protein required for ciliogenesis. May function in ciliogenesis by mediating the transport of proteins like BBS4 to the cilium, but also through the organization of the centriolar satellites. Required for the assembly of signaling-competent cilia with proper structure and length. Mediates this function in part by regulating transition zone assembly and basal body recruitment of the IFT-B complex. Cooperates with the ciliopathy proteins CSPP1 and CEP104 during cilium length regulation. Plays two important roles during cell division. First, is required for mitotic progression via regulation of spindle assembly, organization and orientation, levels of spindle microtubules (MTs), kinetochore-fiber integrity, and chromosome alignment. Second, functions during cytokinesis in part by regulating assembly and organization of central spindle and midbody MTs. Plays a role in retina morphogenesis and/or homeostasis. The protein is Coiled-coil domain-containing protein 66 (CCDC66) of Canis lupus familiaris (Dog).